We begin with the raw amino-acid sequence, 125 residues long: Small ribosomal subunit protein bS6 (125 aa).

The disordered stretch occupies residues 97–125; that stretch reads TEASPMKAAKEERKPLAEVENNDFEDAEE. Positions 104 to 113 are enriched in basic and acidic residues; sequence AAKEERKPLA. Residues 116-125 are compositionally biased toward acidic residues; that stretch reads ENNDFEDAEE.

This sequence belongs to the bacterial ribosomal protein bS6 family.

Functionally, binds together with bS18 to 16S ribosomal RNA. This is Small ribosomal subunit protein bS6 from Haemophilus influenzae (strain PittEE).